Consider the following 660-residue polypeptide: Methionine--tRNA ligase (660 aa).

The 'HIGH' region signature appears at 11 to 21; that stretch reads PYANGPCHLGH. The Zn(2+) site is built by Cys-143, Cys-146, Cys-155, and Cys-158. Residues 325-329 carry the 'KMSKS' region motif; that stretch reads KMSTS. Thr-328 lines the ATP pocket. The region spanning 563–660 is the tRNA-binding domain; sequence DFDKVVIKIG…DECEVGERIQ (98 aa).

Belongs to the class-I aminoacyl-tRNA synthetase family. MetG type 1 subfamily. As to quaternary structure, homodimer. Zn(2+) serves as cofactor.

The protein resides in the cytoplasm. The enzyme catalyses tRNA(Met) + L-methionine + ATP = L-methionyl-tRNA(Met) + AMP + diphosphate. In terms of biological role, is required not only for elongation of protein synthesis but also for the initiation of all mRNA translation through initiator tRNA(fMet) aminoacylation. The chain is Methionine--tRNA ligase from Methanobrevibacter smithii (strain ATCC 35061 / DSM 861 / OCM 144 / PS).